Here is a 642-residue protein sequence, read N- to C-terminus: Bifunctional protein glk (642 aa).

A glucokinase region spans residues 1 to 340; sequence MSTGAQSKAA…QLSNRSGGAS (340 aa). 23–28 serves as a coordination point for ATP; that stretch reads ADVGGT. The region spanning 341-417 is the HTH rpiR-type domain; it reads SAVFERIRQM…LKLATGLTGT (77 aa). Residues 341-642 are putative HTH-type transcriptional regulator; the sequence is SAVFERIRQM…SPAAKDVARD (302 aa). Residues 377–396 constitute a DNA-binding region (H-T-H motif); that stretch reads IVDIARKADVSQPTVIRFCR. Positions 461–600 constitute an SIS domain; sequence AIEILNGARR…AVGVAIRRAS (140 aa). The helical transmembrane segment at 576-596 threads the bilayer; it reads SMISRILHLLMIDILAVGVAI.

The protein in the N-terminal section; belongs to the bacterial glucokinase family.

It localises to the membrane. It catalyses the reaction D-glucose + ATP = D-glucose 6-phosphate + ADP + H(+). This is Bifunctional protein glk (glk) from Burkholderia lata (strain ATCC 17760 / DSM 23089 / LMG 22485 / NCIMB 9086 / R18194 / 383).